The primary structure comprises 885 residues: Probable alpha-glucosidase Os06g0675700 (885 aa).

The first 33 residues, 1 to 33 (MMGSPPAPPARRLGALAVFLLALFLAAPWGVDC), serve as a signal peptide directing secretion. N195, N378, and N397 each carry an N-linked (GlcNAc...) asparagine glycan. Active-site residues include D443 and E446. 2 N-linked (GlcNAc...) asparagine glycosylation sites follow: N467 and N477. The active-site Proton donor is the D540. N-linked (GlcNAc...) asparagine glycans are attached at residues N576 and N844.

The protein belongs to the glycosyl hydrolase 31 family.

It carries out the reaction Hydrolysis of terminal, non-reducing (1-&gt;4)-linked alpha-D-glucose residues with release of alpha-D-glucose.. The polypeptide is Probable alpha-glucosidase Os06g0675700 (Oryza sativa subsp. japonica (Rice)).